The chain runs to 322 residues: Putative heme-binding peroxidase (322 aa).

Catalysis depends on His-38, which acts as the Proton acceptor. His-162 lines the heme b pocket. Residue Trp-178 is the Tryptophan radical intermediate of the active site. Residues 288 to 322 (ISAPKKSNHPTGPAKGAQGGCPVAASQGGCPRAKL) are disordered.

The protein belongs to the peroxidase family. Cytochrome c peroxidase subfamily. The cofactor is heme b.

Its function is as follows. Destroys radicals which are normally produced within the cells and which are toxic to biological systems. This is Putative heme-binding peroxidase from Aspergillus fumigatus (strain ATCC MYA-4609 / CBS 101355 / FGSC A1100 / Af293) (Neosartorya fumigata).